Reading from the N-terminus, the 698-residue chain is MAAADALANVRNIGIMAHIDAGKTTTTERILFYTGITYKIGEVHEGAAVMDWMAQEQERGITITSAATKCEWKGHTIQIIDTPGHVDFTVEVERSLRVLDGAVAVYDGVAGVEPQTENVWRQADKYNVPRMCFVNKLDRTGADFFRCVQMMVDRLNATPLVLQVPIGLEADHIGVVDLIDMRALTWRGETQKGEDYAVEEIPAELADTAAEWREKLMETLADVDDAVMEKYLEGGEFSVEEIKAAIRRATIAGKANPVLCGSAFKNKGVQPMLDAVVDFLPSPLDIPAIEGTGTDGETPLQRKPSTSEPFSGLAFKIQTDKHLGKLTYMRVYSGVLESGSQVVNSTKDRKERIGKIYQMHANKREERSSAKAGDIIAVQGLKQTTTGDTLCDPANPVILESMTFPEPVIEVAIEPKTKADQEKLSTAIQRLAEEDPTFRVKLDDETGQTVISGMGELHLDILVDRMRREFNVEANIGKPQVAYRETIRRKVEKVEYTHKKQTGGSGQYARVIVSLEPLPLDNDSPTYEFANAVTGGRVPREFIPSVDAGAQDAMQYGILAGFPLVGVKLTLVDGQYHEVDSSEMAFKIAGSMVLKDAARKADPALLEPMMAVEVTTPEENMGDVIGDINSRRGIIQAMEERGGARVVRALVPLSEMFGYVGDLRSKTQGRASYSMQFDSYAEVPASVAKEIIAKATGE.

Residues 8–284 (ANVRNIGIMA…AVVDFLPSPL (277 aa)) form the tr-type G domain. GTP contacts are provided by residues 17-24 (AHIDAGKT), 81-85 (DTPGH), and 135-138 (NKLD). A disordered region spans residues 289 to 309 (IEGTGTDGETPLQRKPSTSEP).

This sequence belongs to the TRAFAC class translation factor GTPase superfamily. Classic translation factor GTPase family. EF-G/EF-2 subfamily.

It is found in the cytoplasm. Functionally, catalyzes the GTP-dependent ribosomal translocation step during translation elongation. During this step, the ribosome changes from the pre-translocational (PRE) to the post-translocational (POST) state as the newly formed A-site-bound peptidyl-tRNA and P-site-bound deacylated tRNA move to the P and E sites, respectively. Catalyzes the coordinated movement of the two tRNA molecules, the mRNA and conformational changes in the ribosome. This chain is Elongation factor G, found in Salinispora arenicola (strain CNS-205).